The primary structure comprises 370 residues: Tyrosine-protein kinase transforming protein SEA (370 aa).

The Protein kinase domain maps to 60-323 (THRSRVIGRG…GLVCELERVL (264 aa)). Residues 66–74 (IGRGHFGSV) and Lys-92 contribute to the ATP site. The active-site Proton acceptor is Asp-186. At Tyr-216 the chain carries Phosphotyrosine; by autocatalysis. The disordered stretch occupies residues 345-370 (PPFPPAPRGQLPDSEDEEDEEEEVAE). Residues 357 to 370 (DSEDEEDEEEEVAE) show a composition bias toward acidic residues.

The protein belongs to the protein kinase superfamily. Tyr protein kinase family.

The catalysed reaction is L-tyrosyl-[protein] + ATP = O-phospho-L-tyrosyl-[protein] + ADP + H(+). The chain is Tyrosine-protein kinase transforming protein SEA (V-SEA) from Galliformes.